A 329-amino-acid polypeptide reads, in one-letter code: Mitochondrial nuclease (329 aa).

The active-site Proton acceptor is the histidine 138. Mg(2+) is bound at residue asparagine 170.

This sequence belongs to the DNA/RNA non-specific endonuclease family. In terms of assembly, homodimer. Requires Mn(2+) as cofactor. It depends on Mg(2+) as a cofactor.

Its subcellular location is the mitochondrion inner membrane. Functionally, this enzyme has both RNase and DNase activity. The sequence is that of Mitochondrial nuclease (NUC1) from Saccharomyces cerevisiae (strain ATCC 204508 / S288c) (Baker's yeast).